A 465-amino-acid polypeptide reads, in one-letter code: Solute carrier family 7 member 12 (465 aa).

Over 1–6 (MQLLRA) the chain is Cytoplasmic. Residues 7 to 27 (LGVFHVSMILFSATLGTGIFV) traverse the membrane as a helical segment. The Extracellular portion of the chain corresponds to 28 to 39 (TPKAVLKYSSLN). The helical transmembrane segment at 40-60 (IPVSLSIWAGCGLLSIMSALC) threads the bilayer. The Cytoplasmic portion of the chain corresponds to 61–81 (NAEIATTYPLSGASYYFLKRT). Residues 82–102 (LGSSVAFLSLWIKLFAHFLGI) traverse the membrane as a helical segment. Over 103–132 (GAQCLLIATSVIQCFYSGCPAPELPTKCLA) the chain is Extracellular. Residues 133–153 (LAILWSFGIVSARGIKTVAWF) traverse the membrane as a helical segment. Asparagine 154 is a topological domain (cytoplasmic). A helical transmembrane segment spans residues 155–175 (TVSSFIKLSVLCLISLTVLLV). At 176–202 (NGKKENVSRFENALDAELPNASQIADA) the chain is on the extracellular side. A helical membrane pass occupies residues 203 to 223 (ILQVSYSYLGSSVLIVIAGEI). The Cytoplasmic portion of the chain corresponds to 224-234 (KRPTETIPKTL). The chain crosses the membrane as a helical span at residues 235–255 (IYGISIVTVLYLLTNISYLAV). The Extracellular segment spans residues 256 to 280 (LTSQEIIFSDSVGVTWMNRVFPSIQ). The helical transmembrane segment at 281–301 (WISSFLISAFLLGSVSCGIVS) threads the bilayer. The Cytoplasmic portion of the chain corresponds to 302–327 (ASRVFYSASQEGEFPSIYSMLNDHHS). Residues 328–351 (PAVADIQIVILSSVAIISSSIIYL) traverse the membrane as a helical segment. Topologically, residues 352–356 (VKYVS) are extracellular. Residues 357–375 (LGSFCINLLQMIGLLKIRY) form a helical membrane-spanning segment. The Cytoplasmic portion of the chain corresponds to 376–386 (QNPDIPRPYKV). Residues 387–407 (WLPFIFGSIALSLFLIFTPVI) traverse the membrane as a helical segment. At 408–409 (QS) the chain is on the extracellular side. Residues 410-430 (PSIEHVYQVVFLFCGFLCYWL) traverse the membrane as a helical segment. The Cytoplasmic segment spans residues 431-465 (QANLNGHATCFDTITCYCQLLFNISPSEDPEEQKN).

Belongs to the amino acid-polyamine-organocation (APC) superfamily. As to quaternary structure, probably forms multimers, perhaps with an unknown protein(s). As to expression, expressed in kidney and red blood cells (at protein level). Expressed in kidney along the collecting ducts in the cortex, outer and inner medulla. May be expressed in placenta, lungs, spleen and skeletal muscles.

The protein resides in the apical cell membrane. Its subcellular location is the basal cell membrane. It localises to the cytoplasm. Functionally, probably mediates sodium- and chloride-independent uptake of neutral amino acids. In Mus musculus (Mouse), this protein is Solute carrier family 7 member 12.